The primary structure comprises 357 residues: S-adenosylmethionine:tRNA ribosyltransferase-isomerase (357 aa).

This sequence belongs to the QueA family. As to quaternary structure, monomer.

Its subcellular location is the cytoplasm. The catalysed reaction is 7-aminomethyl-7-carbaguanosine(34) in tRNA + S-adenosyl-L-methionine = epoxyqueuosine(34) in tRNA + adenine + L-methionine + 2 H(+). The protein operates within tRNA modification; tRNA-queuosine biosynthesis. In terms of biological role, transfers and isomerizes the ribose moiety from AdoMet to the 7-aminomethyl group of 7-deazaguanine (preQ1-tRNA) to give epoxyqueuosine (oQ-tRNA). In Edwardsiella ictaluri (strain 93-146), this protein is S-adenosylmethionine:tRNA ribosyltransferase-isomerase.